A 427-amino-acid polypeptide reads, in one-letter code: Histidine--tRNA ligase (427 aa).

This sequence belongs to the class-II aminoacyl-tRNA synthetase family. Homodimer.

It localises to the cytoplasm. It catalyses the reaction tRNA(His) + L-histidine + ATP = L-histidyl-tRNA(His) + AMP + diphosphate + H(+). The sequence is that of Histidine--tRNA ligase from Lacticaseibacillus casei (strain BL23) (Lactobacillus casei).